A 337-amino-acid polypeptide reads, in one-letter code: Tetraacyldisaccharide 4'-kinase (337 aa).

56–63 contacts ATP; the sequence is VAGGAGKT.

This sequence belongs to the LpxK family.

The enzyme catalyses a lipid A disaccharide + ATP = a lipid IVA + ADP + H(+). It participates in glycolipid biosynthesis; lipid IV(A) biosynthesis; lipid IV(A) from (3R)-3-hydroxytetradecanoyl-[acyl-carrier-protein] and UDP-N-acetyl-alpha-D-glucosamine: step 6/6. Transfers the gamma-phosphate of ATP to the 4'-position of a tetraacyldisaccharide 1-phosphate intermediate (termed DS-1-P) to form tetraacyldisaccharide 1,4'-bis-phosphate (lipid IVA). In Rhodospirillum centenum (strain ATCC 51521 / SW), this protein is Tetraacyldisaccharide 4'-kinase.